A 161-amino-acid chain; its full sequence is UPF0262 protein mll6455 (161 aa).

It belongs to the UPF0262 family.

The protein is UPF0262 protein mll6455 of Mesorhizobium japonicum (strain LMG 29417 / CECT 9101 / MAFF 303099) (Mesorhizobium loti (strain MAFF 303099)).